A 298-amino-acid polypeptide reads, in one-letter code: Acetylglutamate kinase (298 aa).

Substrate-binding positions include 69-70, R91, and N196; that span reads GG.

The protein belongs to the acetylglutamate kinase family. ArgB subfamily.

It is found in the cytoplasm. The catalysed reaction is N-acetyl-L-glutamate + ATP = N-acetyl-L-glutamyl 5-phosphate + ADP. It functions in the pathway amino-acid biosynthesis; L-arginine biosynthesis; N(2)-acetyl-L-ornithine from L-glutamate: step 2/4. Its function is as follows. Catalyzes the ATP-dependent phosphorylation of N-acetyl-L-glutamate. This chain is Acetylglutamate kinase, found in Rhodopseudomonas palustris (strain BisA53).